We begin with the raw amino-acid sequence, 362 residues long: Stress response regulator protein 1 (362 aa).

Disordered stretches follow at residues 1 to 39 (MTRL…SLVQ) and 163 to 188 (TLKS…ETKT). Positions 19–39 (PSQLLHSASLSSSPSSPSLVQ) are enriched in low complexity. Residues 209-327 (KFLLVDDNLI…LDFMANVIDE (119 aa)) form the Response regulatory domain. 4-aspartylphosphate is present on Asp-260.

Functionally, required for stress adaptation, morphogenesis and virulence. This chain is Stress response regulator protein 1 (SRR1), found in Lodderomyces elongisporus (strain ATCC 11503 / CBS 2605 / JCM 1781 / NBRC 1676 / NRRL YB-4239) (Yeast).